A 345-amino-acid polypeptide reads, in one-letter code: MARPGQRWLSKWLVAMVVLTLCRLATPLAKNLEPVSWSSLNPKFLSGKGLVIYPKIGDKLDIICPRAEAGRPYEYYKLYLVRPEQAAACSTVLDPNVLVTCNKPHQEIRFTIKFQEFSPNYMGLEFKKYHDYYITSTSNGSLEGLENREGGVCRTRTMKIVMKVGQDPNAVTPEQLTTSRPSKESDNTVKTATQAPGRGSQGDSDGKHETVNQEEKSGPGAGGGGSGDSDSFFNSKVALFAAVGAGCVIFLLIIIFLTVLLLKLRKRHRKHTQQRAAALSLSTLASPKGGSGTAGTEPSDIIIPLRTTENNYCPHYEKVSGDYGHPVYIVQEMPPQSPANIYYKV.

The signal sequence occupies residues 1–24 (MARPGQRWLSKWLVAMVVLTLCRL). Residues 25–236 (ATPLAKNLEP…GDSDSFFNSK (212 aa)) lie on the Extracellular side of the membrane. The Ephrin RBD domain maps to 30-164 (KNLEPVSWSS…TRTMKIVMKV (135 aa)). 2 disulfides stabilise this stretch: Cys64-Cys101 and Cys89-Cys153. A glycan (N-linked (GlcNAc...) asparagine) is linked at Asn139. Residues 169–227 (NAVTPEQLTTSRPSKESDNTVKTATQAPGRGSQGDSDGKHETVNQEEKSGPGAGGGGSG) are disordered. Basic and acidic residues predominate over residues 204-217 (SDGKHETVNQEEKS). Residues 237–257 (VALFAAVGAGCVIFLLIIIFL) traverse the membrane as a helical segment. The Cytoplasmic portion of the chain corresponds to 258 to 345 (TVLLLKLRKR…QSPANIYYKV (88 aa)). The short motif at 259-272 (VLLLKLRKRHRKHT) is the Nuclear localization signal element. Residues 262-293 (LKLRKRHRKHTQQRAAALSLSTLASPKGGSGT) form an interaction with ZHX2 region. Phosphoserine occurs at positions 280 and 286. Positions 343–345 (YKV) match the PDZ-binding motif.

It belongs to the ephrin family. Interacts (via PDZ-binding motif) with GRIP1 and GRIP2 (via PDZ domain 6). Interacts with TLE1. The intracellular domain peptide interacts with ZHX2; the interaction enhances ZHX2 transcriptional repression activity. Post-translationally, inducible phosphorylation of tyrosine residues in the cytoplasmic domain. In terms of processing, proteolytically processed. The ectodomain is cleaved, probably by a metalloprotease, to produce a membrane-tethered C-terminal fragment. This fragment is then further processed by the gamma-secretase complex to yield a soluble intracellular domain peptide which can translocate to the nucleus. The intracellular domain peptide is highly labile suggesting that it is targeted for degradation by the proteasome. In terms of tissue distribution, expressed on lateral floor plate cells, specifically on commissural axon segments that have passed through the floor plate. Expressed in cells of the retinal ganglion cell layer during retinal axon guidance to the optic disk. Expressed in myogenic progenitor cells.

The protein resides in the cell membrane. It is found in the membrane raft. Its subcellular location is the nucleus. Cell surface transmembrane ligand for Eph receptors, a family of receptor tyrosine kinases which are crucial for migration, repulsion and adhesion during neuronal, vascular and epithelial development. Binding to Eph receptors residing on adjacent cells leads to contact-dependent bidirectional signaling into neighboring cells. Shows high affinity for the receptor tyrosine kinase EPHB1/ELK. Can also bind EPHB2 and EPHB3. Binds to, and induces the collapse of, commissural axons/growth cones in vitro. May play a role in constraining the orientation of longitudinally projecting axons. The chain is Ephrin-B1 (Efnb1) from Mus musculus (Mouse).